A 320-amino-acid polypeptide reads, in one-letter code: Putative polysaccharide deacetylase (320 aa).

Residues 69-303 (RSIESCFEYG…ITSKEGVWVA (235 aa)) enclose the NodB homology domain.

It belongs to the polysaccharide deacetylase family. In terms of assembly, homodimer.

It is found in the prospore. May deacetylate chitin. Required for spore formation. This is Putative polysaccharide deacetylase from Schizosaccharomyces pombe (strain 972 / ATCC 24843) (Fission yeast).